A 145-amino-acid polypeptide reads, in one-letter code: UPF0310 protein PH1033 (145 aa).

The protein belongs to the UPF0310 family.

This Pyrococcus horikoshii (strain ATCC 700860 / DSM 12428 / JCM 9974 / NBRC 100139 / OT-3) protein is UPF0310 protein PH1033.